The following is a 124-amino-acid chain: Ribonuclease pancreatic (124 aa).

The segment covering 1–13 (KESAAAKFERQHM) has biased composition (basic and acidic residues). The tract at residues 1–24 (KESAAAKFERQHMDPSMSSASSSN) is disordered. Residues lysine 7 and arginine 10 each coordinate substrate. Histidine 12 functions as the Proton acceptor in the catalytic mechanism. Cystine bridges form between cysteine 26/cysteine 84, cysteine 40/cysteine 95, cysteine 58/cysteine 110, and cysteine 65/cysteine 72. Substrate is bound by residues 41 to 45 (KPVNT), lysine 66, and arginine 85. The Proton donor role is filled by histidine 119.

The protein belongs to the pancreatic ribonuclease family. In terms of assembly, monomer. Interacts with and forms tight 1:1 complexes with RNH1. Dimerization of two such complexes may occur. Interaction with RNH1 inhibits this protein. In terms of tissue distribution, pancreas.

The protein localises to the secreted. It catalyses the reaction an [RNA] containing cytidine + H2O = an [RNA]-3'-cytidine-3'-phosphate + a 5'-hydroxy-ribonucleotide-3'-[RNA].. The catalysed reaction is an [RNA] containing uridine + H2O = an [RNA]-3'-uridine-3'-phosphate + a 5'-hydroxy-ribonucleotide-3'-[RNA].. Functionally, endonuclease that catalyzes the cleavage of RNA on the 3' side of pyrimidine nucleotides. Acts on single-stranded and double-stranded RNA. The polypeptide is Ribonuclease pancreatic (RNASE1) (Dama dama (Fallow deer)).